Consider the following 335-residue polypeptide: Protein MET1, chloroplastic (335 aa).

Residues Met-1–Pro-18 are compositionally biased toward low complexity. Disordered regions lie at residues Met-1–Leu-29 and Ser-66–Thr-88. A chloroplast-targeting transit peptide spans Met-1–Lys-73. Over residues Arg-19–Leu-29 the composition is skewed to polar residues. Acidic residues predominate over residues Gly-78–Thr-88. One can recognise a PDZ domain in the interval Tyr-97 to Ser-136. TPR repeat units lie at residues Arg-217–Pro-250, Ser-254–Asp-287, and Lys-289–Ile-323.

As to quaternary structure, interacts directly with stromal loops of photosystem II (PSII) core components psbB (CP47) and psbC (CP43). Associates with PSII subcomplexes formed during the PSII repair cycle (e.g. PSII dimers, PSII monomers, CP43-less PSII monomerand PSII reaction centers). In terms of processing, phosphorylated rapidly (e.g. within 5 minutes) but transiently at threonine and serine residues after wounding. Expressed in leaves (at protein level). Mostly expressed in leaves, stems and siliques, and, to a lower extent, in flowers and senescent leaves, but not present in roots (at protein level).

Its subcellular location is the plastid. It is found in the chloroplast membrane. It localises to the chloroplast thylakoid membrane. In terms of biological role, involved in photosystem II supercomplex formation and repair, probably acting as a psbB/psbC chaperone on the stromal side of the membrane. This chain is Protein MET1, chloroplastic, found in Arabidopsis thaliana (Mouse-ear cress).